We begin with the raw amino-acid sequence, 408 residues long: DNA-directed RNA polymerase subunit Rpo1C (408 aa).

This sequence belongs to the RNA polymerase beta' chain family. As to quaternary structure, part of the RNA polymerase complex.

The protein resides in the cytoplasm. The enzyme catalyses RNA(n) + a ribonucleoside 5'-triphosphate = RNA(n+1) + diphosphate. Its function is as follows. DNA-dependent RNA polymerase (RNAP) catalyzes the transcription of DNA into RNA using the four ribonucleoside triphosphates as substrates. Forms part of the jaw domain. The polypeptide is DNA-directed RNA polymerase subunit Rpo1C (Methanosarcina mazei (strain ATCC BAA-159 / DSM 3647 / Goe1 / Go1 / JCM 11833 / OCM 88) (Methanosarcina frisia)).